A 1267-amino-acid polypeptide reads, in one-letter code: MSQPSDIVKVIVALPTLSKKPQQGKKKKSKELEEITLQFRKDSKLQNVLDFLSIAPATKYFTNYNLKNSTGDLLLSSEEKTLRELCSDKDEYKVALELKPYNQYQALKHVLTSRDFFGFASETEDGLSNVAVSTGSKFYKLPLKEIKEKSPENEDKDTENKKPTSMNVTDEEKVEFNHMVHGLFETLKKEKKVLLKDLMNTDTSVVTPCLRSINFSPYNPVPAFYRTKGHLFYLQIVTLEGESLQVTAIPSGFYINKSTTSKFDPSPKENDGHVDTVHYTLYDLLASSSKNFVTHISSLEKKFDDLESVTYVRPACTTLNKPWLIPAIPTNGPDYLRTQIDSFNFEPERNFNDEFQSIKEIPTNTLQARIESERIFAKLTHEFTINATKGAMDILYGNGTAMNPDSPLEEQIFLKNNIFYSFVGDLNQTYADKGGDEAAIASANQDLRTLNMLTRLNLPNIHHLLTTIVDFGGKRILAQTPVPGLLSPMGVKITTNEETKEETVSELSSDICVKYGLDENEKKVVFNEEFDEILNDQFAKSFHLKKHTIQGTELVFSSQSKGIVGSDKRHYILDLANTYPLDVEFAKENFDDVKEASKKYPHRQTLIRPELVEKWWATKIENDKVELVKAYEENLYSYNPDAYQVPGVEDETVVEISKYLNEEIIPNVVQDYLNGNIISPYNGEHLADTFHKNGVNMRYLGKFANLVKEELRKQEEAHEAKLAQVIVDNKEYEEWEKSYLQKIETMIKERQAKINKLVQEGKEVPKELTEDLKLDDNEIKKPSTEKPVVVSYDELVPLIKTAELEIISRSLKHILRKYSRSLPPIVIPALISFVFNLLFGTTYNPAPAVESVDPLYPVDQYEFKNLTHDTLLKEIEQEAVVRYRYELEGDWFAEHELYPFTLIRSICNKFGVQLLNKDYFFSTEQLEEYKQSLDKKSRAKYVAPLTTFSVSDLTVIPKIKAIDYSSPISEELWSQGASIINENQKDGLTLLAQSIGFKEEVNSILHSSVAEKYLTLSTIYNKLGLNAEAIAFCRKSCAIYERVCGVDSFELLRALTNLATLEFANESPYNVALIYQRIIQTVSGYGLDKIHHPIFTNIFNYLEQLSLGVQDAKLAVEVLKSLGDFLVSIDGTESLPYAYIKSKLGNLLAADNRFSDALNQIKVAERIFTKELGTNHGSTAQARQWVDGLTNLIKDVNQKKQLQQDQTAASGLKQQPQKSKSGHNKKETTNPDLADKSVDELLSFIEGEDGKSSKTTKKSKSKGKNKK.

TPR repeat units follow at residues 64 to 102, 420 to 453, 716 to 749, 795 to 830, 904 to 939, 1010 to 1043, and 1138 to 1171; these read YNLK…KPYN, YSFV…LNML, EAHE…MIKE, LVPL…IPAL, RSIC…KSRA, AEKY…YERV, and AYIK…FTKE. The region spanning 329–586 is the Clu domain; sequence PTNGPDYLRT…NTYPLDVEFA (258 aa). The segment covering 1203-1219 has biased composition (polar residues); the sequence is QQDQTAASGLKQQPQKS. The tract at residues 1203 to 1267 is disordered; sequence QQDQTAASGL…KSKSKGKNKK (65 aa). Basic and acidic residues predominate over residues 1224 to 1239; sequence NKKETTNPDLADKSVD. The span at 1254 to 1267 shows a compositional bias: basic residues; it reads KTTKKSKSKGKNKK.

Belongs to the CLU family. As to quaternary structure, may associate with the eukaryotic translation initiation factor 3 (eIF-3) complex.

The protein resides in the cytoplasm. Its function is as follows. mRNA-binding protein involved in proper cytoplasmic distribution of mitochondria. The protein is Clustered mitochondria protein homolog of Candida glabrata (strain ATCC 2001 / BCRC 20586 / JCM 3761 / NBRC 0622 / NRRL Y-65 / CBS 138) (Yeast).